Reading from the N-terminus, the 400-residue chain is 1-deoxy-D-xylulose 5-phosphate reductoisomerase (400 aa).

The NADPH site is built by T10, G11, S12, I13, G36, N38, and N124. 1-deoxy-D-xylulose 5-phosphate is bound at residue K125. E126 is a binding site for NADPH. Mn(2+) is bound at residue D150. 1-deoxy-D-xylulose 5-phosphate is bound by residues S151, E152, S186, and H209. E152 lines the Mn(2+) pocket. G215 contacts NADPH. 1-deoxy-D-xylulose 5-phosphate is bound by residues S222, N227, K228, and E231. E231 lines the Mn(2+) pocket.

Belongs to the DXR family. The cofactor is Mg(2+). Mn(2+) serves as cofactor.

It catalyses the reaction 2-C-methyl-D-erythritol 4-phosphate + NADP(+) = 1-deoxy-D-xylulose 5-phosphate + NADPH + H(+). Its pathway is isoprenoid biosynthesis; isopentenyl diphosphate biosynthesis via DXP pathway; isopentenyl diphosphate from 1-deoxy-D-xylulose 5-phosphate: step 1/6. In terms of biological role, catalyzes the NADPH-dependent rearrangement and reduction of 1-deoxy-D-xylulose-5-phosphate (DXP) to 2-C-methyl-D-erythritol 4-phosphate (MEP). This is 1-deoxy-D-xylulose 5-phosphate reductoisomerase from Aliivibrio salmonicida (strain LFI1238) (Vibrio salmonicida (strain LFI1238)).